The primary structure comprises 171 residues: Large ribosomal subunit protein bL9 (171 aa).

The protein belongs to the bacterial ribosomal protein bL9 family.

In terms of biological role, binds to the 23S rRNA. This Rickettsia prowazekii (strain Madrid E) protein is Large ribosomal subunit protein bL9.